The primary structure comprises 159 residues: Dihydrofolate reductase (159 aa).

The 158-residue stretch at 1–158 folds into the DHFR domain; that stretch reads MISLIAALAV…HSYCFEILER (158 aa). Substrate is bound at residue Ile5. NADP(+) contacts are provided by residues Ala7 and 13–19; that span reads VIGMENA. Asp27 lines the substrate pocket. 45–46 is an NADP(+) binding site; it reads HT. Substrate contacts are provided by Arg52 and Arg57. NADP(+) contacts are provided by residues 63–64, Lys76, and 95–102; these read SS and GGGRVYEQ. Thr113 is a binding site for substrate.

Belongs to the dihydrofolate reductase family.

It carries out the reaction (6S)-5,6,7,8-tetrahydrofolate + NADP(+) = 7,8-dihydrofolate + NADPH + H(+). It functions in the pathway cofactor biosynthesis; tetrahydrofolate biosynthesis; 5,6,7,8-tetrahydrofolate from 7,8-dihydrofolate: step 1/1. Key enzyme in folate metabolism. Catalyzes an essential reaction for de novo glycine and purine synthesis, and for DNA precursor synthesis. The polypeptide is Dihydrofolate reductase (folA) (Escherichia coli O6:H1 (strain CFT073 / ATCC 700928 / UPEC)).